The sequence spans 145 residues: D-aminoacyl-tRNA deacylase (145 aa).

The Gly-cisPro motif, important for rejection of L-amino acids signature appears at 137-138 (GP).

The protein belongs to the DTD family. As to quaternary structure, homodimer.

The protein localises to the cytoplasm. The catalysed reaction is glycyl-tRNA(Ala) + H2O = tRNA(Ala) + glycine + H(+). It catalyses the reaction a D-aminoacyl-tRNA + H2O = a tRNA + a D-alpha-amino acid + H(+). In terms of biological role, an aminoacyl-tRNA editing enzyme that deacylates mischarged D-aminoacyl-tRNAs. Also deacylates mischarged glycyl-tRNA(Ala), protecting cells against glycine mischarging by AlaRS. Acts via tRNA-based rather than protein-based catalysis; rejects L-amino acids rather than detecting D-amino acids in the active site. By recycling D-aminoacyl-tRNA to D-amino acids and free tRNA molecules, this enzyme counteracts the toxicity associated with the formation of D-aminoacyl-tRNA entities in vivo and helps enforce protein L-homochirality. This Limosilactobacillus fermentum (strain NBRC 3956 / LMG 18251) (Lactobacillus fermentum) protein is D-aminoacyl-tRNA deacylase.